An 860-amino-acid chain; its full sequence is Protein argonaute-2 (860 aa).

Tyrosine 2 bears the 3'-nitrotyrosine mark. The 120-residue stretch at 230–349 folds into the PAZ domain; sequence PVIEFVCEVL…LPLEVCNIVA (120 aa). The interval 312–317 is interaction with guide RNA; that stretch reads YFKDRH. Serine 388 carries the post-translational modification Phosphoserine. One can recognise a Piwi domain in the interval 518–819; sequence LVVVILPGKT…VAFRARYHLV (302 aa). The interaction with guide RNA stretch occupies residues 525–567; the sequence is GKTPVYAEVKRVGDTVLGMATQCVQMKNVQRTTPQTLSNLCLK. Residues 588-591 form an interaction with GW182 family members region; it reads FQQP. Residue aspartate 598 participates in a divalent metal cation binding. Residues 651 to 661 form an interaction with GW182 family members region; it reads LIQFYKSTRFK. A divalent metal cation is bound at residue aspartate 670. Proline 701 carries the post-translational modification 4-hydroxyproline. 3 interaction with guide RNA regions span residues 710 to 711, 754 to 762, and 791 to 813; these read KR, HAGIQGTSR, and YVRC…VAFR. Histidine 808 contributes to the a divalent metal cation binding site. 4 positions are modified to phosphoserine: serine 825, serine 829, serine 832, and serine 835.

It belongs to the argonaute family. Ago subfamily. As to quaternary structure, interacts with DICER1 through its Piwi domain and with TARBP2 during assembly of the RNA-induced silencing complex (RISC). Together, DICER1, AGO2 and TARBP2 constitute the trimeric RISC loading complex (RLC), or micro-RNA (miRNA) loading complex (miRLC). Within the RLC/miRLC, DICER1 and TARBP2 are required to process precursor miRNAs (pre-miRNAs) to mature miRNAs and then load them onto AGO2. AGO2 bound to the mature miRNA constitutes the minimal RISC and may subsequently dissociate from DICER1 and TARBP2. Note however that the term RISC has also been used to describe the trimeric RLC/miRLC. The formation of RISC complexes containing siRNAs rather than miRNAs appears to occur independently of DICER1. Interacts with AGO1. Also interacts with DDB1, DDX5, DDX6, DDX20, DHX30, DHX36, DDX47, DHX9, ELAVL, FXR1, GEMIN4, HNRNPF, IGF2BP1, ILF3, IMP8, MATR3, PABPC1, PRMT5, P4HA1, P4HB, RBM4, SART3, TNRC6A, TNRC6B, UPF1 and YBX1. Interacts with the P-body components DCP1A and XRN1. Associates with polysomes and messenger ribonucleoproteins (mNRPs). Interacts with RBM4; the interaction is modulated under stress-induced conditions, occurs under both cell proliferation and differentiation conditions and in an RNA- and phosphorylation-independent manner. Interacts with LIMD1, WTIP and AJUBA. Interacts with TRIM71. Interacts with APOBEC3G in an RNA-dependent manner. Interacts with APOBEC3A, APOBEC3C, APOBEC3F and APOBEC3H. Interacts with DICER1, TARBP2, EIF6, MOV10 and RPL7A (60S ribosome subunit); they form a large RNA-induced silencing complex (RISC). Interacts with FMR1. Interacts with ZFP36. Interacts with RC3H1; the interaction is RNA independent. Interacts with ARB2A. Found in a complex composed of AGO2, CHD7 and ARB2A. Interacts with SND1 and SYT11. Interacts with CLNK. Interacts with GARRE1. Interacts with GRB2; this interaction is important for the formation of a ternary complex containing GRB2, AGO2 and DICER1. Requires Mg(2+) as cofactor. Mn(2+) serves as cofactor. In terms of processing, hydroxylated. 4-hydroxylation appears to enhance protein stability but is not required for miRNA-binding or endonuclease activity. Post-translationally, ubiquitinated on surface-exposed lysines by a SCF-like E3 ubiquitin-protein ligase complex containing ZSWIM8 during target-directed microRNA degradation (TDMD), a process that mediates degradation of microRNAs (miRNAs). Ubiquitination by the SCF-like E3 ubiquitin-protein ligase complex containing ZSWIM8 leads to its subsequent degradation, thereby exposing miRNAs for degradation. ZSWIM8 recognizes and binds AGO2 when it is engaged with a TDMD target. Phosphorylation at Ser-388 by AKT3; leads to up-regulate translational repression of microRNA target and down-regulate endonucleolytic cleavage. In terms of processing, a phosphorylation cycle of C-terminal serine cluster (Ser-825-Ser-835) regulates the release of target mRNAs. Target-binding leads to phosphorylation of these residues by CSNK1A1, which reduces the affinity of AGO2 for mRNA and enables target release. The ANKRD52-PPP6C phosphatase complex dephosphorylates the residues, which primes AGO2 for binding a new target. As to expression, ubiquitous expression in 9.5 day embryos with highest levels in forebrain, heart, limb buds, and branchial arches.

Its subcellular location is the cytoplasm. The protein localises to the P-body. The protein resides in the nucleus. The enzyme catalyses Endonucleolytic cleavage to 5'-phosphomonoester.. Functionally, required for RNA-mediated gene silencing (RNAi) by the RNA-induced silencing complex (RISC). The 'minimal RISC' appears to include AGO2 bound to a short guide RNA such as a microRNA (miRNA) or short interfering RNA (siRNA). These guide RNAs direct RISC to complementary mRNAs that are targets for RISC-mediated gene silencing. The precise mechanism of gene silencing depends on the degree of complementarity between the miRNA or siRNA and its target. Binding of RISC to a perfectly complementary mRNA generally results in silencing due to endonucleolytic cleavage of the mRNA specifically by AGO2. Binding of RISC to a partially complementary mRNA results in silencing through inhibition of translation, and this is independent of endonuclease activity. May inhibit translation initiation by binding to the 7-methylguanosine cap, thereby preventing the recruitment of the translation initiation factor eIF4-E. May also inhibit translation initiation via interaction with EIF6, which itself binds to the 60S ribosomal subunit and prevents its association with the 40S ribosomal subunit. The inhibition of translational initiation leads to the accumulation of the affected mRNA in cytoplasmic processing bodies (P-bodies), where mRNA degradation may subsequently occur. In some cases RISC-mediated translational repression is also observed for miRNAs that perfectly match the 3' untranslated region (3'-UTR). Can also up-regulate the translation of specific mRNAs under certain growth conditions. Binds to the AU element of the 3'-UTR of the TNF (TNF-alpha) mRNA and up-regulates translation under conditions of serum starvation. Also required for transcriptional gene silencing (TGS), in which short RNAs known as antigene RNAs or agRNAs direct the transcriptional repression of complementary promoter regions. Regulates lymphoid and erythroid development and function, and this is independent of endonuclease activity. The sequence is that of Protein argonaute-2 (Ago2) from Mus musculus (Mouse).